The sequence spans 375 residues: Queuine tRNA-ribosyltransferase (375 aa).

Catalysis depends on D89, which acts as the Proton acceptor. Substrate contacts are provided by residues 89-93, D143, Q187, and G214; that span reads DSGGF. The RNA binding stretch occupies residues 245-251; sequence GVGKPED. The active-site Nucleophile is D264. An RNA binding; important for wobble base 34 recognition region spans residues 269–273; it reads TRNAR. Zn(2+)-binding residues include C302, C304, C307, and H333.

It belongs to the queuine tRNA-ribosyltransferase family. Homodimer. Within each dimer, one monomer is responsible for RNA recognition and catalysis, while the other monomer binds to the replacement base PreQ1. It depends on Zn(2+) as a cofactor.

It carries out the reaction 7-aminomethyl-7-carbaguanine + guanosine(34) in tRNA = 7-aminomethyl-7-carbaguanosine(34) in tRNA + guanine. It participates in tRNA modification; tRNA-queuosine biosynthesis. In terms of biological role, catalyzes the base-exchange of a guanine (G) residue with the queuine precursor 7-aminomethyl-7-deazaguanine (PreQ1) at position 34 (anticodon wobble position) in tRNAs with GU(N) anticodons (tRNA-Asp, -Asn, -His and -Tyr). Catalysis occurs through a double-displacement mechanism. The nucleophile active site attacks the C1' of nucleotide 34 to detach the guanine base from the RNA, forming a covalent enzyme-RNA intermediate. The proton acceptor active site deprotonates the incoming PreQ1, allowing a nucleophilic attack on the C1' of the ribose to form the product. After dissociation, two additional enzymatic reactions on the tRNA convert PreQ1 to queuine (Q), resulting in the hypermodified nucleoside queuosine (7-(((4,5-cis-dihydroxy-2-cyclopenten-1-yl)amino)methyl)-7-deazaguanosine). This chain is Queuine tRNA-ribosyltransferase, found in Salmonella paratyphi A (strain ATCC 9150 / SARB42).